Here is a 385-residue protein sequence, read N- to C-terminus: tRNA-specific 2-thiouridylase MnmA (385 aa).

Residues 18–25 and Leu-44 contribute to the ATP site; that span reads AMSGGVDS. Cys-112 acts as the Nucleophile in catalysis. Residues Cys-112 and Cys-209 are joined by a disulfide bond. Gly-136 is an ATP binding site. The segment at 159–161 is interaction with tRNA; sequence RDQ. Cys-209 (cysteine persulfide intermediate) is an active-site residue.

This sequence belongs to the MnmA/TRMU family.

The protein resides in the cytoplasm. It catalyses the reaction S-sulfanyl-L-cysteinyl-[protein] + uridine(34) in tRNA + AH2 + ATP = 2-thiouridine(34) in tRNA + L-cysteinyl-[protein] + A + AMP + diphosphate + H(+). Its function is as follows. Catalyzes the 2-thiolation of uridine at the wobble position (U34) of tRNA, leading to the formation of s(2)U34. The protein is tRNA-specific 2-thiouridylase MnmA of Methylorubrum extorquens (strain PA1) (Methylobacterium extorquens).